We begin with the raw amino-acid sequence, 382 residues long: Glutamyl-tRNA reductase (382 aa).

Residues 38–41 (TCNR), Ser85, 90–92 (ENQ), and Gln96 each bind substrate. Cys39 acts as the Nucleophile in catalysis. Residue 164 to 169 (GAGEIG) participates in NADP(+) binding.

Belongs to the glutamyl-tRNA reductase family. As to quaternary structure, homodimer.

It carries out the reaction (S)-4-amino-5-oxopentanoate + tRNA(Glu) + NADP(+) = L-glutamyl-tRNA(Glu) + NADPH + H(+). It functions in the pathway porphyrin-containing compound metabolism; protoporphyrin-IX biosynthesis; 5-aminolevulinate from L-glutamyl-tRNA(Glu): step 1/2. Functionally, catalyzes the NADPH-dependent reduction of glutamyl-tRNA(Glu) to glutamate 1-semialdehyde (GSA). This chain is Glutamyl-tRNA reductase, found in Methanococcus maripaludis (strain C7 / ATCC BAA-1331).